Here is a 201-residue protein sequence, read N- to C-terminus: Probable nicotinate-nucleotide adenylyltransferase (201 aa).

It belongs to the NadD family.

It carries out the reaction nicotinate beta-D-ribonucleotide + ATP + H(+) = deamido-NAD(+) + diphosphate. The protein operates within cofactor biosynthesis; NAD(+) biosynthesis; deamido-NAD(+) from nicotinate D-ribonucleotide: step 1/1. Its function is as follows. Catalyzes the reversible adenylation of nicotinate mononucleotide (NaMN) to nicotinic acid adenine dinucleotide (NaAD). This chain is Probable nicotinate-nucleotide adenylyltransferase, found in Clostridium botulinum (strain Langeland / NCTC 10281 / Type F).